A 110-amino-acid polypeptide reads, in one-letter code: UPF0122 protein RBAM_015800 (110 aa).

This sequence belongs to the UPF0122 family.

Might take part in the signal recognition particle (SRP) pathway. This is inferred from the conservation of its genetic proximity to ftsY/ffh. May be a regulatory protein. The chain is UPF0122 protein RBAM_015800 from Bacillus velezensis (strain DSM 23117 / BGSC 10A6 / LMG 26770 / FZB42) (Bacillus amyloliquefaciens subsp. plantarum).